Consider the following 494-residue polypeptide: Probable cytochrome P450 518A1 (494 aa).

The helical transmembrane segment at 1–21 threads the bilayer; it reads MSILIILIISIIFYLIFDFLY. C438 contacts heme.

It belongs to the cytochrome P450 family. Heme serves as cofactor.

It is found in the membrane. This Dictyostelium discoideum (Social amoeba) protein is Probable cytochrome P450 518A1 (cyp518A1).